We begin with the raw amino-acid sequence, 520 residues long: Ribonuclease Y (520 aa).

A helical transmembrane segment spans residues 4-24 (TVWILISILLATVGAVVGFFV). The KH domain occupies 210–273 (TVSVVNLPND…ETARIALDKL (64 aa)). The HD domain maps to 336 to 429 (VLKHSMEVAY…VAAADALSAA (94 aa)).

It belongs to the RNase Y family.

It localises to the cell membrane. Functionally, endoribonuclease that initiates mRNA decay. This Bacillus cereus (strain ZK / E33L) protein is Ribonuclease Y.